Here is a 150-residue protein sequence, read N- to C-terminus: 6,7-dimethyl-8-ribityllumazine synthase (150 aa).

5-amino-6-(D-ribitylamino)uracil contacts are provided by residues Phe11, 43 to 45 (VYD), and 67 to 69 (AVI). Position 72–73 (72–73 (AT)) interacts with (2S)-2-hydroxy-3-oxobutyl phosphate. The active-site Proton donor is His75. A 5-amino-6-(D-ribitylamino)uracil-binding site is contributed by Leu100. Residue Arg115 coordinates (2S)-2-hydroxy-3-oxobutyl phosphate.

Belongs to the DMRL synthase family.

The catalysed reaction is (2S)-2-hydroxy-3-oxobutyl phosphate + 5-amino-6-(D-ribitylamino)uracil = 6,7-dimethyl-8-(1-D-ribityl)lumazine + phosphate + 2 H2O + H(+). Its pathway is cofactor biosynthesis; riboflavin biosynthesis; riboflavin from 2-hydroxy-3-oxobutyl phosphate and 5-amino-6-(D-ribitylamino)uracil: step 1/2. Its function is as follows. Catalyzes the formation of 6,7-dimethyl-8-ribityllumazine by condensation of 5-amino-6-(D-ribitylamino)uracil with 3,4-dihydroxy-2-butanone 4-phosphate. This is the penultimate step in the biosynthesis of riboflavin. This is 6,7-dimethyl-8-ribityllumazine synthase from Pyrobaculum arsenaticum (strain DSM 13514 / JCM 11321 / PZ6).